Reading from the N-terminus, the 314-residue chain is 4-hydroxy-3-methylbut-2-enyl diphosphate reductase (314 aa).

Cysteine 12 is a [4Fe-4S] cluster binding site. (2E)-4-hydroxy-3-methylbut-2-enyl diphosphate is bound by residues histidine 41 and histidine 74. 2 residues coordinate dimethylallyl diphosphate: histidine 41 and histidine 74. Isopentenyl diphosphate-binding residues include histidine 41 and histidine 74. Cysteine 96 serves as a coordination point for [4Fe-4S] cluster. Position 124 (histidine 124) interacts with (2E)-4-hydroxy-3-methylbut-2-enyl diphosphate. Dimethylallyl diphosphate is bound at residue histidine 124. Residue histidine 124 coordinates isopentenyl diphosphate. Residue glutamate 126 is the Proton donor of the active site. Position 167 (threonine 167) interacts with (2E)-4-hydroxy-3-methylbut-2-enyl diphosphate. A [4Fe-4S] cluster-binding site is contributed by cysteine 197. (2E)-4-hydroxy-3-methylbut-2-enyl diphosphate contacts are provided by serine 225, serine 226, asparagine 227, and serine 269. Dimethylallyl diphosphate-binding residues include serine 225, serine 226, asparagine 227, and serine 269. Serine 225, serine 226, asparagine 227, and serine 269 together coordinate isopentenyl diphosphate.

It belongs to the IspH family. Requires [4Fe-4S] cluster as cofactor.

The enzyme catalyses isopentenyl diphosphate + 2 oxidized [2Fe-2S]-[ferredoxin] + H2O = (2E)-4-hydroxy-3-methylbut-2-enyl diphosphate + 2 reduced [2Fe-2S]-[ferredoxin] + 2 H(+). It catalyses the reaction dimethylallyl diphosphate + 2 oxidized [2Fe-2S]-[ferredoxin] + H2O = (2E)-4-hydroxy-3-methylbut-2-enyl diphosphate + 2 reduced [2Fe-2S]-[ferredoxin] + 2 H(+). The protein operates within isoprenoid biosynthesis; dimethylallyl diphosphate biosynthesis; dimethylallyl diphosphate from (2E)-4-hydroxy-3-methylbutenyl diphosphate: step 1/1. Its pathway is isoprenoid biosynthesis; isopentenyl diphosphate biosynthesis via DXP pathway; isopentenyl diphosphate from 1-deoxy-D-xylulose 5-phosphate: step 6/6. Catalyzes the conversion of 1-hydroxy-2-methyl-2-(E)-butenyl 4-diphosphate (HMBPP) into a mixture of isopentenyl diphosphate (IPP) and dimethylallyl diphosphate (DMAPP). Acts in the terminal step of the DOXP/MEP pathway for isoprenoid precursor biosynthesis. This Haemophilus influenzae (strain ATCC 51907 / DSM 11121 / KW20 / Rd) protein is 4-hydroxy-3-methylbut-2-enyl diphosphate reductase.